The sequence spans 252 residues: MITKRIIPCLDVKDGRVVKGVQFVQLRDAGDPVELAKAYDEQGADELVFLDISASHEGRKTMVDVVERVAAQLAIPFTVGGGIHSLDDMKRILRAGADKVSLNTAAVLHPSLVTEGADFFGSQCIVVAIDAKYDDTIGSWRVYTHGGRNATEWEVVAWAKEAVRLGAGEILLTSMDADGGKNGFDVELTRRVSEAVSVPVIASGGAGKAEHFLDVFERGKADAALAASIFHYKETSVGQVKAYLRERGVNVR.

Active-site residues include Asp-11 and Asp-130.

It belongs to the HisA/HisF family. Heterodimer of HisH and HisF.

It is found in the cytoplasm. The catalysed reaction is 5-[(5-phospho-1-deoxy-D-ribulos-1-ylimino)methylamino]-1-(5-phospho-beta-D-ribosyl)imidazole-4-carboxamide + L-glutamine = D-erythro-1-(imidazol-4-yl)glycerol 3-phosphate + 5-amino-1-(5-phospho-beta-D-ribosyl)imidazole-4-carboxamide + L-glutamate + H(+). It participates in amino-acid biosynthesis; L-histidine biosynthesis; L-histidine from 5-phospho-alpha-D-ribose 1-diphosphate: step 5/9. In terms of biological role, IGPS catalyzes the conversion of PRFAR and glutamine to IGP, AICAR and glutamate. The HisF subunit catalyzes the cyclization activity that produces IGP and AICAR from PRFAR using the ammonia provided by the HisH subunit. The sequence is that of Imidazole glycerol phosphate synthase subunit HisF from Geobacillus thermodenitrificans (strain NG80-2).